The primary structure comprises 528 residues: Linear element-associated protein hop1 (528 aa).

An HORMA domain is found at 11 to 212 (TKSDFTLKNL…RGEFKDIVSF (202 aa)). The PHD-type zinc-finger motif lies at 334-385 (LLNCECGDSTEDSEMFQCERCDGWVHCACYGFESDSDPRQPNQLLCYTCLLV). Zn(2+) is bound by residues Cys337, Cys339, Cys351, Cys354, His359, Cys362, Cys379, and Cys382. The interval 507–528 (RPKKVSKTSNTKETDTMKPLRI) is disordered. Positions 516 to 528 (NTKETDTMKPLRI) are enriched in basic and acidic residues.

Interacts (via N-terminus) with rec10; the interaction is direct. Interacts (via C-terminus) with rec15 (via C-terminus); the interaction is direct.

Its subcellular location is the nucleus. The protein localises to the chromosome. Facilitates initiation of meiotic recombination and DNA double-strand break (DSB) formation at DSB hotspot sites by enhancing the interaction between rec10 and rec15. The protein is Linear element-associated protein hop1 of Schizosaccharomyces pombe (strain 972 / ATCC 24843) (Fission yeast).